The chain runs to 134 residues: Small ribosomal subunit protein uS11 (134 aa).

The protein belongs to the universal ribosomal protein uS11 family. In terms of assembly, part of the 30S ribosomal subunit. Interacts with proteins S7 and S18. Binds to IF-3.

Located on the platform of the 30S subunit, it bridges several disparate RNA helices of the 16S rRNA. Forms part of the Shine-Dalgarno cleft in the 70S ribosome. This chain is Small ribosomal subunit protein uS11, found in Delftia acidovorans (strain DSM 14801 / SPH-1).